Here is a 429-residue protein sequence, read N- to C-terminus: Trigger factor (429 aa).

A PPIase FKBP-type domain is found at 161–246; that stretch reads GDRLSIDFKG…INEVALPKEP (86 aa).

This sequence belongs to the FKBP-type PPIase family. Tig subfamily.

The protein resides in the cytoplasm. The enzyme catalyses [protein]-peptidylproline (omega=180) = [protein]-peptidylproline (omega=0). Functionally, involved in protein export. Acts as a chaperone by maintaining the newly synthesized protein in an open conformation. Functions as a peptidyl-prolyl cis-trans isomerase. This Ruthia magnifica subsp. Calyptogena magnifica protein is Trigger factor.